We begin with the raw amino-acid sequence, 203 residues long: Superoxide dismutase [Mn] (203 aa).

Mn(2+)-binding residues include H27, H81, D164, and H168.

This sequence belongs to the iron/manganese superoxide dismutase family. Mn(2+) is required as a cofactor.

The enzyme catalyses 2 superoxide + 2 H(+) = H2O2 + O2. In terms of biological role, destroys superoxide anion radicals which are normally produced within the cells and which are toxic to biological systems. The polypeptide is Superoxide dismutase [Mn] (sodA) (Xanthomonas campestris pv. campestris (strain 8004)).